The following is a 185-amino-acid chain: Glycerol-3-phosphate acyltransferase 4 (185 aa).

Transmembrane regions (helical) follow at residues 1 to 21 (MPLLFVLLSYLLGTFPSAYLA), 47 to 67 (LGRGWGLAVFVFDLAKGSLAI), 69 to 89 (LALAAGLSPGWVMFCGLAAVL), 113 to 133 (LLIATQPMLIMGGLGLLVLLF), 137 to 157 (VIAASAVMFGLLWLAVILYGL), and 158 to 178 (PGGVVAYSIGLPVVVGLTHFI).

The protein belongs to the PlsY family. In terms of assembly, probably interacts with PlsX.

The protein resides in the cell membrane. It carries out the reaction an acyl phosphate + sn-glycerol 3-phosphate = a 1-acyl-sn-glycero-3-phosphate + phosphate. Its pathway is lipid metabolism; phospholipid metabolism. Functionally, catalyzes the transfer of an acyl group from acyl-phosphate (acyl-PO(4)) to glycerol-3-phosphate (G3P) to form lysophosphatidic acid (LPA). This enzyme utilizes acyl-phosphate as fatty acyl donor, but not acyl-CoA or acyl-ACP. The protein is Glycerol-3-phosphate acyltransferase 4 of Dehalococcoides mccartyi (strain ATCC BAA-2266 / KCTC 15142 / 195) (Dehalococcoides ethenogenes (strain 195)).